The chain runs to 320 residues: Cytochrome c biogenesis protein CcsA (320 aa).

Transmembrane regions (helical) follow at residues 14–34, 37–57, 68–88, 97–117, 143–163, 228–248, 263–283, and 289–309; these read SFFL…YINI, ITIL…TFLL, LSNL…IHLI, WLGI…TLSL, MMLS…ILII, VISL…VWAN, WALI…IKGW, and AIIA…VNLL.

This sequence belongs to the CcmF/CycK/Ccl1/NrfE/CcsA family. May interact with Ccs1.

It is found in the plastid. The protein resides in the chloroplast thylakoid membrane. In terms of biological role, required during biogenesis of c-type cytochromes (cytochrome c6 and cytochrome f) at the step of heme attachment. This is Cytochrome c biogenesis protein CcsA from Marchantia polymorpha (Common liverwort).